A 562-amino-acid polypeptide reads, in one-letter code: T-complex protein 1 subunit epsilon (562 aa).

It belongs to the TCP-1 chaperonin family. Heterooligomeric complex of about 850 to 900 kDa that forms two stacked rings, 12 to 16 nm in diameter.

The protein resides in the cytoplasm. In terms of biological role, molecular chaperone; assists the folding of proteins upon ATP hydrolysis. Known to play a role, in vitro, in the folding of actin and tubulin. In yeast may play a role in mitotic spindle formation. The polypeptide is T-complex protein 1 subunit epsilon (CCT5) (Saccharomyces cerevisiae (strain ATCC 204508 / S288c) (Baker's yeast)).